A 403-amino-acid chain; its full sequence is G-protein coupled receptor family C group 5 member B (403 aa).

An N-terminal signal peptide occupies residues 1–28 (MFVASERKMRAHQVLTFLLLFVITSVAS). The Extracellular segment spans residues 29-56 (ENASTSRGCGLDLLPQYVSLCDLDAIWG). N-linked (GlcNAc...) asparagine glycosylation is present at asparagine 30. A helical transmembrane segment spans residues 57–77 (IVVEAVAGAGALITLLLMLIL). Over 78-94 (LVRLPFIKEKEKKSPVG) the chain is Cytoplasmic. Residues 95 to 115 (LHFLFLLGTLGLFGLTFAFII) traverse the membrane as a helical segment. Residues 116-126 (QEDETICSVRR) lie on the Extracellular side of the membrane. Residues 127–147 (FLWGVLFALCFSCLLSQAWRV) traverse the membrane as a helical segment. Residues 148–162 (RRLVRHGTGPAGWQL) lie on the Cytoplasmic side of the membrane. The chain crosses the membrane as a helical span at residues 163 to 183 (VGLALCLMLVQVIIAVEWLVL). Over 184–199 (TVLRDTRPACAYEPMD) the chain is Extracellular. Residues 200 to 220 (FVMALIYDMVLLVVTLGLALF) traverse the membrane as a helical segment. Topologically, residues 221-234 (TLCGKFKRWKLNGA) are cytoplasmic. The chain crosses the membrane as a helical span at residues 235–255 (FLLITAFLSVLIWVAWMTMYL). At 256 to 271 (FGNVKLQQGDAWNDPT) the chain is on the extracellular side. The chain crosses the membrane as a helical span at residues 272-292 (LAITLAASGWVFVIFHAIPEI). Topologically, residues 293-403 (HCTLLPALQE…PPSHTGRHLW (111 aa)) are cytoplasmic. The disordered stretch occupies residues 349–371 (GFPNGSLGKRPSGSLGKRPSAPF). At serine 354 the chain carries Phosphoserine.

It belongs to the G-protein coupled receptor 3 family. In terms of tissue distribution, expression is high in kidney, pancreas, and testis, medium in brain, heart, prostate, small intestine, and spleen, low in liver, placenta, skeletal muscle, colon, ovary, and thymus, and not detectable in lung and peripheral leukocyte. According to PubMed:10945465, highly expressed in most brain areas examined, with the highest levels observed in corpus callosum, caudate nucleus, putamen, substantia nigra, thalamus, hippocampus, and spinal cord as well as in dorsal root ganglia (DRG). Expressed in glia limitans, ependymal cells, astrocyte cell bodies, the perivascular region in astrocyte endfeet, but not in neurons. In the periphery, expression levels are relatively low, compared to the CNS, with the strongest expression detected in pancreas, testis, uterus, and stomach.

Its subcellular location is the cell membrane. It localises to the cytoplasmic vesicle membrane. G-protein coupled receptor involved in the regulation of cell volume. This chain is G-protein coupled receptor family C group 5 member B (GPRC5B), found in Homo sapiens (Human).